A 368-amino-acid chain; its full sequence is GDP-fucose transporter 1 (368 aa).

9 consecutive transmembrane segments (helical) span residues L64–L84, L98–I118, V141–Y161, F166–L186, T195–F215, W217–V237, L251–G271, F287–M307, and A332–I352.

This sequence belongs to the TPT transporter family. SLC35C subfamily.

It is found in the golgi apparatus membrane. It carries out the reaction GMP(out) + GDP-beta-L-fucose(in) = GMP(in) + GDP-beta-L-fucose(out). Functionally, antiporter specific for GDP-l-fucose and depending on the concomitant reverse transport of GMP. Involved in GDP-fucose import from the cytoplasm into the Golgi lumen. The polypeptide is GDP-fucose transporter 1 (slc35c1) (Dictyostelium discoideum (Social amoeba)).